A 1579-amino-acid chain; its full sequence is Pentafunctional AROM polypeptide (1579 aa).

The interval 1–391 is 3-dehydroquinate synthase; that stretch reads MKVELSKVPI…YGTSAHVVSD (391 aa). NAD(+) is bound by residues 44–46, 79–82, 110–112, and D115; these read DTN, EAHK, and GGV. R126 serves as a coordination point for 7-phospho-2-dehydro-3-deoxy-D-arabino-heptonate. Residue 135-136 participates in NAD(+) binding; that stretch reads TS. Positions 142 and 148 each coordinate 7-phospho-2-dehydro-3-deoxy-D-arabino-heptonate. K157 provides a ligand contact to NAD(+). Residue N158 participates in 7-phospho-2-dehydro-3-deoxy-D-arabino-heptonate binding. Residues 175–178 and N186 contribute to the NAD(+) site; that span reads WLET. E190 lines the Zn(2+) pocket. Residues 190–193 and K257 each bind 7-phospho-2-dehydro-3-deoxy-D-arabino-heptonate; that span reads EVIK. The active-site Proton acceptor; for 3-dehydroquinate synthase activity is E267. 7-phospho-2-dehydro-3-deoxy-D-arabino-heptonate-binding positions include 271 to 275 and H278; that span reads RNLLN. Residue H278 coordinates Zn(2+). H282 serves as the catalytic Proton acceptor; for 3-dehydroquinate synthase activity. Positions 294 and 363 each coordinate 7-phospho-2-dehydro-3-deoxy-D-arabino-heptonate. A Zn(2+)-binding site is contributed by H294. Residues 404–862 form an EPSP synthase region; it reads VYPFKTLENG…WDVLHTQLGA (459 aa). C844 functions as the For EPSP synthase activity in the catalytic mechanism. The segment at 881-1070 is shikimate kinase; the sequence is SIVIIGMRAA…IPTNRSSFVC (190 aa). 886–893 is an ATP binding site; the sequence is GMRAAGKT. Residues 1071–1283 form a 3-dehydroquinase region; it reads LTFDDLAAHK…SAPGQLTLSQ (213 aa). The Proton acceptor; for 3-dehydroquinate dehydratase activity role is filled by H1188. K1217 serves as the catalytic Schiff-base intermediate with substrate; for 3-dehydroquinate dehydratase activity. The tract at residues 1296–1579 is shikimate dehydrogenase; that stretch reads AKNFYVVGSP…IYSAVTEEQA (284 aa).

The protein in the N-terminal section; belongs to the sugar phosphate cyclases superfamily. Dehydroquinate synthase family. This sequence in the 2nd section; belongs to the EPSP synthase family. In the 3rd section; belongs to the shikimate kinase family. It in the 4th section; belongs to the type-I 3-dehydroquinase family. The protein in the C-terminal section; belongs to the shikimate dehydrogenase family. In terms of assembly, homodimer. Requires Zn(2+) as cofactor.

It is found in the cytoplasm. The catalysed reaction is 7-phospho-2-dehydro-3-deoxy-D-arabino-heptonate = 3-dehydroquinate + phosphate. It catalyses the reaction 3-dehydroquinate = 3-dehydroshikimate + H2O. It carries out the reaction shikimate + NADP(+) = 3-dehydroshikimate + NADPH + H(+). The enzyme catalyses shikimate + ATP = 3-phosphoshikimate + ADP + H(+). The catalysed reaction is 3-phosphoshikimate + phosphoenolpyruvate = 5-O-(1-carboxyvinyl)-3-phosphoshikimate + phosphate. It functions in the pathway metabolic intermediate biosynthesis; chorismate biosynthesis; chorismate from D-erythrose 4-phosphate and phosphoenolpyruvate: step 2/7. Its pathway is metabolic intermediate biosynthesis; chorismate biosynthesis; chorismate from D-erythrose 4-phosphate and phosphoenolpyruvate: step 3/7. It participates in metabolic intermediate biosynthesis; chorismate biosynthesis; chorismate from D-erythrose 4-phosphate and phosphoenolpyruvate: step 4/7. The protein operates within metabolic intermediate biosynthesis; chorismate biosynthesis; chorismate from D-erythrose 4-phosphate and phosphoenolpyruvate: step 5/7. It functions in the pathway metabolic intermediate biosynthesis; chorismate biosynthesis; chorismate from D-erythrose 4-phosphate and phosphoenolpyruvate: step 6/7. Functionally, the AROM polypeptide catalyzes 5 consecutive enzymatic reactions in prechorismate polyaromatic amino acid biosynthesis. This Lachancea thermotolerans (strain ATCC 56472 / CBS 6340 / NRRL Y-8284) (Yeast) protein is Pentafunctional AROM polypeptide.